A 446-amino-acid chain; its full sequence is B3 domain-containing protein REM12 (446 aa).

The tract at residues 1–46 is disordered; sequence MVLNSSDLGPSRCDIRDLPAPSSTNDQGKTELARKKKVKRSNTEIE. DNA-binding regions (TF-B3) lie at residues 56–153 and 193–289; these read CFVA…FCST and FMTL…VNTQ. A disordered region spans residues 295–334; that stretch reads SQQGECSRDSEKESSICAEPSRGNKKWKATNNRKERRDSS. Positions 341-435 form a DNA-binding region, TF-B3 3; sequence YVTLTLTPED…TTPVFKFCSN (95 aa).

Its subcellular location is the nucleus. This is B3 domain-containing protein REM12 (REM12) from Arabidopsis thaliana (Mouse-ear cress).